Here is a 258-residue protein sequence, read N- to C-terminus: Glutamate racemase (258 aa).

Residues 11 to 12 and 43 to 44 contribute to the substrate site; these read DS and YG. Catalysis depends on Cys-74, which acts as the Proton donor/acceptor. 75 to 76 provides a ligand contact to substrate; that stretch reads NT. The active-site Proton donor/acceptor is Cys-187. 188-189 contacts substrate; it reads TH.

It belongs to the aspartate/glutamate racemases family.

It catalyses the reaction L-glutamate = D-glutamate. It participates in cell wall biogenesis; peptidoglycan biosynthesis. In terms of biological role, provides the (R)-glutamate required for cell wall biosynthesis. The polypeptide is Glutamate racemase (Bifidobacterium animalis subsp. lactis (strain AD011)).